The sequence spans 557 residues: Ras-specific guanine nucleotide-releasing factor RalGPS2 (557 aa).

A Ras-GEF domain is found at 49 to 287 (TPEEYAGQIT…YKLSLKIEPG (239 aa)). Residues 283–314 (KIEPGTSTPRSAASREDLVGPEVGASPQSGRK) form a disordered region. A phosphoserine mark is found at serine 293, serine 296, serine 308, and serine 311. A Phosphothreonine modification is found at threonine 326. Positions 327 to 330 (PPSP) match the PXXP motif. Phosphoserine is present on residues serine 329 and serine 343. Phosphothreonine is present on threonine 361. Residues 368 to 409 (RHLLDDSVMEPHAPSRGQAESSTLSSGISIGSSDGSELSEET) are disordered. Residue serine 374 is modified to Phosphoserine. Low complexity predominate over residues 387 to 403 (ESSTLSSGISIGSSDGS). A PH domain is found at 431-543 (AVTIQGVLRR…WFKHLSAACQ (113 aa)). The tract at residues 433–557 (TIQGVLRRKT…QVPTNLMTFE (125 aa)) is required for stimulation of nucleotide exchange by RALA.

In terms of assembly, interacts with the SH3 domains of GRB2 and PLCG1. Interacts with RALA.

The protein resides in the cytoplasm. Its subcellular location is the cell membrane. Its function is as follows. Guanine nucleotide exchange factor for the small GTPase RALA. May be involved in cytoskeletal organization. May also be involved in the stimulation of transcription in a Ras-independent fashion. The polypeptide is Ras-specific guanine nucleotide-releasing factor RalGPS2 (RALGPS2) (Macaca fascicularis (Crab-eating macaque)).